Reading from the N-terminus, the 397-residue chain is 1-deoxy-D-xylulose 5-phosphate reductoisomerase (397 aa).

Positions 10, 11, 12, 13, 36, 38, and 124 each coordinate NADPH. Lys125 is a 1-deoxy-D-xylulose 5-phosphate binding site. Glu126 is a binding site for NADPH. A Mn(2+)-binding site is contributed by Asp150. Positions 151, 152, 186, and 209 each coordinate 1-deoxy-D-xylulose 5-phosphate. Glu152 provides a ligand contact to Mn(2+). Gly215 contacts NADPH. Positions 222, 227, 228, and 231 each coordinate 1-deoxy-D-xylulose 5-phosphate. Glu231 provides a ligand contact to Mn(2+).

It belongs to the DXR family. Mg(2+) serves as cofactor. Requires Mn(2+) as cofactor.

The catalysed reaction is 2-C-methyl-D-erythritol 4-phosphate + NADP(+) = 1-deoxy-D-xylulose 5-phosphate + NADPH + H(+). It participates in isoprenoid biosynthesis; isopentenyl diphosphate biosynthesis via DXP pathway; isopentenyl diphosphate from 1-deoxy-D-xylulose 5-phosphate: step 1/6. Functionally, catalyzes the NADPH-dependent rearrangement and reduction of 1-deoxy-D-xylulose-5-phosphate (DXP) to 2-C-methyl-D-erythritol 4-phosphate (MEP). This is 1-deoxy-D-xylulose 5-phosphate reductoisomerase from Photobacterium profundum (strain SS9).